A 213-amino-acid polypeptide reads, in one-letter code: Endoplasmic reticulum vesicle protein 25 (213 aa).

The signal sequence occupies residues 1–20 (MILRIPSLLYLFTLLTAVYA). The Lumenal segment spans residues 21 to 181 (VKFDLTSDRN…TNESTNQRVK (161 aa)). One can recognise a GOLD domain in the interval 33–122 (PKCIWNFASA…VRSVELDVDI (90 aa)). Residues 182 to 202 (VFSVLIICCTIGLGVWQLLHL) traverse the membrane as a helical segment. Over 203 to 213 (RSFFKRKYLID) the chain is Cytoplasmic.

The protein belongs to the EMP24/GP25L family.

It localises to the endoplasmic reticulum membrane. It is found in the golgi apparatus membrane. Its function is as follows. Constituent of COPII-coated endoplasmic reticulum-derived transport vesicles. Required for efficient transport of a subset of secretory proteins to the Golgi. Facilitates retrograde transport from the Golgi to the endoplasmic reticulum. The polypeptide is Endoplasmic reticulum vesicle protein 25 (ERV25) (Cryptococcus neoformans var. neoformans serotype D (strain JEC21 / ATCC MYA-565) (Filobasidiella neoformans)).